We begin with the raw amino-acid sequence, 557 residues long: Protein Red (557 aa).

Residues 1-90 (MPERDSEPFS…YAKLRQQEIE (90 aa)) form a disordered region. Positions 16–25 (DGHDVDDPHS) are enriched in basic and acidic residues. Residues 42 to 53 (TPRAAPTSAPPS) are compositionally biased toward low complexity. An N6-acetyllysine mark is found at Lys-98 and Lys-137. Residue Lys-151 forms a Glycyl lysine isopeptide (Lys-Gly) (interchain with G-Cter in SUMO2) linkage. A disordered region spans residues 181 to 205 (KEKEEEELMEKPQKETKKDEDPENK). The residue at position 287 (Ser-287) is a Phosphoserine. The segment covering 294–303 (RNKKLKKKDK) has biased composition (basic residues). A disordered region spans residues 294-402 (RNKKLKKKDK…PMDVDKGPGS (109 aa)). Residues 304-313 (GKLEEKKPPE) show a composition bias toward basic and acidic residues. Glycyl lysine isopeptide (Lys-Gly) (interchain with G-Cter in SUMO2) cross-links involve residues Lys-310 and Lys-331. Over residues 332-398 (TPRDKERERY…VDDEPMDVDK (67 aa)) the composition is skewed to basic and acidic residues. 17 tandem repeats follow at residues 342 to 343 (RE), 344 to 345 (RE), 346 to 347 (RD), 348 to 349 (RE), 350 to 351 (RD), 352 to 353 (RD), 354 to 355 (RE), 356 to 357 (RD), 358 to 359 (RE), 360 to 361 (RD), 362 to 363 (RE), 364 to 365 (RE), 366 to 367 (RE), 368 to 369 (RD), 370 to 371 (RE), 372 to 373 (RE), and 374 to 375 (RE). The tract at residues 342–375 (RERERDRERDRDRERDRERDRERERERDRERERE) is 17 X 2 AA tandem repeats of R-[ED]. Glycyl lysine isopeptide (Lys-Gly) (interchain with G-Cter in SUMO2) cross-links involve residues Lys-386, Lys-388, Lys-404, and Lys-408. Phosphoserine is present on residues Ser-417 and Ser-460. Thr-485 is subject to Phosphothreonine. Glycyl lysine isopeptide (Lys-Gly) (interchain with G-Cter in SUMO2) cross-links involve residues Lys-496, Lys-501, and Lys-509. Phosphoserine is present on Ser-536. Residues Lys-541, Lys-543, and Lys-553 each participate in a glycyl lysine isopeptide (Lys-Gly) (interchain with G-Cter in SUMO2) cross-link.

Belongs to the RED family. In terms of assembly, component of the spliceosome B complex. Interacts with SMU1. Interacts with MAD1L1. May interact with DHX15. In terms of tissue distribution, ubiquitous.

It localises to the nucleus. It is found in the nucleoplasm. The protein resides in the chromosome. Its subcellular location is the cytoplasm. The protein localises to the cytoskeleton. It localises to the spindle pole. Functionally, involved in pre-mRNA splicing as a component of the spliceosome. Auxiliary spliceosomal protein that regulates selection of alternative splice sites in a small set of target pre-mRNA species. Required for normal mitotic cell cycle progression. Recruits MAD1L1 and MAD2L1 to kinetochores, and is required to trigger the spindle assembly checkpoint. Required for normal accumulation of SMU1. The protein is Protein Red (Ik) of Mus musculus (Mouse).